We begin with the raw amino-acid sequence, 192 residues long: METVALIDYGSGNLRSPAKALERAAAGCHASFQVLVTSDADAVRKADRVVLPAVGAFADCKRGLSEVPGMQLMAEGGREYGVTEGLGWIKGEVVKLEPADPTLKIPHMGWNELDIRREHPVLAGLRERAHAYFVHSYRFAVERPEDVIASADYGGPFAAVVGRDNLVGTQFHPEKSQETGLALVANFLTWRV.

The Glutamine amidotransferase type-1 domain occupies 3–192 (TVALIDYGSG…LVANFLTWRV (190 aa)). Active-site residues include H172 and E174.

In terms of assembly, heterodimer of HisH and HisF.

It is found in the cytoplasm. It carries out the reaction 5-[(5-phospho-1-deoxy-D-ribulos-1-ylimino)methylamino]-1-(5-phospho-beta-D-ribosyl)imidazole-4-carboxamide + L-glutamine = D-erythro-1-(imidazol-4-yl)glycerol 3-phosphate + 5-amino-1-(5-phospho-beta-D-ribosyl)imidazole-4-carboxamide + L-glutamate + H(+). The catalysed reaction is L-glutamine + H2O = L-glutamate + NH4(+). The protein operates within amino-acid biosynthesis; L-histidine biosynthesis; L-histidine from 5-phospho-alpha-D-ribose 1-diphosphate: step 5/9. In terms of biological role, IGPS catalyzes the conversion of PRFAR and glutamine to IGP, AICAR and glutamate. The HisH subunit catalyzes the hydrolysis of glutamine to glutamate and ammonia as part of the synthesis of IGP and AICAR. The resulting ammonia molecule is channeled to the active site of HisF. The sequence is that of Imidazole glycerol phosphate synthase subunit HisH (hisH) from Azospirillum brasilense.